Consider the following 328-residue polypeptide: MANRAYLEQKQTQCSIINSSFSMTHRDLPTLTLSGKIRVMVTFFLFLVSTAFNASFLMKLQRQTQKKEEVKKLTRMKVLLKHLTLANLLETVIVMPLDGIWNVTVQWYAGEFLCKALSYLKLFSMYAPAFMMVVISLDRFLAITRPLAVKSNTKVGQSLIAVAWFLSIVLAGPQLYIFRMIYVEDISGQTGNFSQCVTHCSFPEWWQEAFYNLLTFSCLFIGPLLIMLVCNAKIIFTLTQVLHQDPHELQLNRSKNNIPRARLRTLKMTVAFATLFTICWTPYYVLGIWYWFDPEMLNRVSDPVNHFFFLFGLLNPCFDPLIYGYFSL.

At 1–38 (MANRAYLEQKQTQCSIINSSFSMTHRDLPTLTLSGKIR) the chain is on the extracellular side. A glycan (N-linked (GlcNAc...) asparagine) is linked at Asn-18. A helical membrane pass occupies residues 39-58 (VMVTFFLFLVSTAFNASFLM). The Cytoplasmic portion of the chain corresponds to 59 to 77 (KLQRQTQKKEEVKKLTRMK). The chain crosses the membrane as a helical span at residues 78–97 (VLLKHLTLANLLETVIVMPL). Residues 98-115 (DGIWNVTVQWYAGEFLCK) lie on the Extracellular side of the membrane. Residue Asn-102 is glycosylated (N-linked (GlcNAc...) asparagine). An intrachain disulfide couples Cys-114 to Cys-196. The chain crosses the membrane as a helical span at residues 116-137 (ALSYLKLFSMYAPAFMMVVISL). Over 138–164 (DRFLAITRPLAVKSNTKVGQSLIAVAW) the chain is Cytoplasmic. A helical membrane pass occupies residues 165–184 (FLSIVLAGPQLYIFRMIYVE). The Extracellular portion of the chain corresponds to 185–212 (DISGQTGNFSQCVTHCSFPEWWQEAFYN). Asn-192 carries an N-linked (GlcNAc...) asparagine glycan. The helical transmembrane segment at 213–232 (LLTFSCLFIGPLLIMLVCNA) threads the bilayer. Residues 233–281 (KIIFTLTQVLHQDPHELQLNRSKNNIPRARLRTLKMTVAFATLFTICWT) lie on the Cytoplasmic side of the membrane. The chain crosses the membrane as a helical span at residues 282–300 (PYYVLGIWYWFDPEMLNRV). Residues 301–306 (SDPVNH) are Extracellular-facing. A helical transmembrane segment spans residues 307 to 326 (FFFLFGLLNPCFDPLIYGYF). Residues 327 to 328 (SL) lie on the Cytoplasmic side of the membrane.

The protein belongs to the G-protein coupled receptor 1 family.

It is found in the cell membrane. In terms of biological role, receptor for gonadotropin releasing hormone (GnRH) that mediates the action of GnRH to stimulate the secretion of the gonadotropic hormones luteinizing hormone (LH) and follicle-stimulating hormone (FSH). This receptor mediates its action by association with G-proteins that activate a phosphatidylinositol-calcium second messenger system. This Trichosurus vulpecula (Brush-tailed possum) protein is Gonadotropin-releasing hormone receptor (GNRHR).